A 101-amino-acid chain; its full sequence is NAD(P)H-quinone oxidoreductase subunit 4L, chloroplastic (101 aa).

Helical transmembrane passes span 2 to 22 (ILDS…YGLI), 32 to 52 (MSLE…SNFI), and 64 to 84 (IFIM…ILAI).

This sequence belongs to the complex I subunit 4L family. As to quaternary structure, NDH is composed of at least 16 different subunits, 5 of which are encoded in the nucleus.

It localises to the plastid. The protein localises to the chloroplast thylakoid membrane. It carries out the reaction a plastoquinone + NADH + (n+1) H(+)(in) = a plastoquinol + NAD(+) + n H(+)(out). It catalyses the reaction a plastoquinone + NADPH + (n+1) H(+)(in) = a plastoquinol + NADP(+) + n H(+)(out). In terms of biological role, NDH shuttles electrons from NAD(P)H:plastoquinone, via FMN and iron-sulfur (Fe-S) centers, to quinones in the photosynthetic chain and possibly in a chloroplast respiratory chain. The immediate electron acceptor for the enzyme in this species is believed to be plastoquinone. Couples the redox reaction to proton translocation, and thus conserves the redox energy in a proton gradient. The polypeptide is NAD(P)H-quinone oxidoreductase subunit 4L, chloroplastic (Chlorokybus atmophyticus (Soil alga)).